A 1135-amino-acid polypeptide reads, in one-letter code: Exportin-6-A (1135 aa).

The 67-residue stretch at 31 to 97 folds into the Importin N-terminal domain; the sequence is IESLLNNFAQ…RNSLPKLLLS (67 aa).

Belongs to the exportin family. Expressed during meiotic maturation 2 hours after germinal vesicle break down (GVBD) and in unfertilized and fertilized eggs, but not in oocytes (at protein level). Expressed in somatic cells, in oocytes, during meiotic maturation and in unfertilized and fertilized eggs.

Its subcellular location is the nucleus. The protein resides in the cytoplasm. Its function is as follows. Mediates the nuclear export of actin and profilin-actin complexes in somatic cells. Oocyte nuclei lack active actin export. This chain is Exportin-6-A (xpo6-a), found in Xenopus laevis (African clawed frog).